Reading from the N-terminus, the 257-residue chain is Protein YIPF5 (257 aa).

Topologically, residues 1–124 (MSGFENLNTD…KVADGSIMNE (124 aa)) are cytoplasmic. The interaction with Sec23 stretch occupies residues 75 to 106 (PASPQPFYGNNFEDEPPLLEELGINFDHIWQK). Residues 125–145 (TDLAGPMVFCLAFGATLLLAG) traverse the membrane as a helical segment. Lysine 146 is a topological domain (lumenal). A helical membrane pass occupies residues 147–167 (IQFGYVYGISAIGCLGMFCLL). Over 168–173 (NLMSMT) the chain is Cytoplasmic. Residues 174-194 (GVSFGCVASVLGYCLLPMILL) form a helical membrane-spanning segment. The Lumenal segment spans residues 195 to 196 (SS). A helical transmembrane segment spans residues 197-217 (FAVIFSLQGMVGIILTAGIIG). At 218 to 236 (WCSFSASKIFISALAMEGQ) the chain is on the cytoplasmic side. A helical transmembrane segment spans residues 237–257 (QLLVAYPCALLYGVFALISVF).

This sequence belongs to the YIP1 family. In terms of assembly, interacts with the COPII coat components Sec23 (SEC23A and/or SEC23B) and Sec24 (SEC24A and/or SEC24B). Interacts with YIF1A. May interact with RAB1A. Interacts with YIPF3 and YIPF4. As to expression, ubiquitously expressed with abundant expression in pancreatic tissue, islets, beta cells, and brain. Highly expressed in coronary smooth muscles.

It is found in the endoplasmic reticulum membrane. Its subcellular location is the golgi apparatus. The protein localises to the cis-Golgi network membrane. The protein resides in the cytoplasmic vesicle. It localises to the COPII-coated vesicle. Its function is as follows. Plays a role in transport between endoplasmic reticulum and Golgi. In pancreatic beta cells, required to transport proinsulin from endoplasmic reticulum into the Golgi. This Homo sapiens (Human) protein is Protein YIPF5.